A 307-amino-acid polypeptide reads, in one-letter code: Nucleotide-binding protein Acid345_3782 (307 aa).

31–38 (GLSGSGKA) lines the ATP pocket. A GTP-binding site is contributed by 81–84 (DIRE).

The protein belongs to the RapZ-like family.

Functionally, displays ATPase and GTPase activities. This Koribacter versatilis (strain Ellin345) protein is Nucleotide-binding protein Acid345_3782.